Consider the following 220-residue polypeptide: Putative pyrophosphatase PpaX (220 aa).

Asp-9 functions as the Nucleophile in the catalytic mechanism.

Belongs to the HAD-like hydrolase superfamily. PpaX family. The cofactor is Mg(2+).

The catalysed reaction is diphosphate + H2O = 2 phosphate + H(+). This Caldanaerobacter subterraneus subsp. tengcongensis (strain DSM 15242 / JCM 11007 / NBRC 100824 / MB4) (Thermoanaerobacter tengcongensis) protein is Putative pyrophosphatase PpaX.